The primary structure comprises 178 residues: MSEVRLPPLRALDDFVLGSARLAAPDPCDPQRWCHRVINNLLYYQTNYLLCFGIGLALAGYVRPLHTLLSALVVAVALGMLVWAAETRAAVRRCRRSHPAACLAAVLAVGLLVLWVVGGACTFLLSIAGPVLLILVHASLRLRNLKNKIENKIESIGLKRTPMGLLLEALGQEQEAGS.

Residues Met1–Leu41 are Cytoplasmic-facing. Residues Leu42–Val62 form a helical membrane-spanning segment. Residues Arg63–Pro64 lie on the Extracellular side of the membrane. Residues Leu65–Ala85 form a helical membrane-spanning segment. At Glu86 to Arg96 the chain is on the cytoplasmic side. Residues Ser97 to Gly119 traverse the membrane as a helical segment. The Extracellular portion of the chain corresponds to Ala120–Thr122. Residues Phe123–Leu140 traverse the membrane as a helical segment. The Cytoplasmic segment spans residues Arg141–Ser178.

Belongs to the PRA1 family. Interacts with CCR5 and GDE1.

The protein localises to the endosome membrane. Functionally, may be involved in ER/Golgi transport and vesicular traffic. Plays a proapoptotic role in cerulenin-induced neuroblastoma apoptosis. The polypeptide is PRA1 family protein 2 (PRAF2) (Macaca fascicularis (Crab-eating macaque)).